The primary structure comprises 225 residues: Uracil-DNA glycosylase (225 aa).

Catalysis depends on D67, which acts as the Proton acceptor.

Belongs to the uracil-DNA glycosylase (UDG) superfamily. UNG family.

The protein localises to the cytoplasm. The catalysed reaction is Hydrolyzes single-stranded DNA or mismatched double-stranded DNA and polynucleotides, releasing free uracil.. Excises uracil residues from the DNA which can arise as a result of misincorporation of dUMP residues by DNA polymerase or due to deamination of cytosine. In Coxiella burnetii (strain Dugway 5J108-111), this protein is Uracil-DNA glycosylase.